We begin with the raw amino-acid sequence, 278 residues long: Tryptophan synthase alpha chain (278 aa).

Active-site proton acceptor residues include E50 and D61.

Belongs to the TrpA family. In terms of assembly, tetramer of two alpha and two beta chains.

It catalyses the reaction (1S,2R)-1-C-(indol-3-yl)glycerol 3-phosphate + L-serine = D-glyceraldehyde 3-phosphate + L-tryptophan + H2O. It participates in amino-acid biosynthesis; L-tryptophan biosynthesis; L-tryptophan from chorismate: step 5/5. Its function is as follows. The alpha subunit is responsible for the aldol cleavage of indoleglycerol phosphate to indole and glyceraldehyde 3-phosphate. This is Tryptophan synthase alpha chain from Rhodopseudomonas palustris (strain ATCC BAA-98 / CGA009).